A 482-amino-acid chain; its full sequence is Catalase (482 aa).

A compositionally biased stretch (polar residues) spans 1–11; sequence MNAMTNKTLTT. The segment at 1-21 is disordered; it reads MNAMTNKTLTTAAGAPVADNN. Active-site residues include H57 and N130. A heme-binding site is contributed by Y340.

Belongs to the catalase family. As to quaternary structure, homodimer. It depends on heme as a cofactor.

It carries out the reaction 2 H2O2 = O2 + 2 H2O. Its function is as follows. Decomposes hydrogen peroxide into water and oxygen; serves to protect cells from the toxic effects of hydrogen peroxide. The polypeptide is Catalase (katA) (Bordetella bronchiseptica (strain ATCC BAA-588 / NCTC 13252 / RB50) (Alcaligenes bronchisepticus)).